We begin with the raw amino-acid sequence, 854 residues long: Putative COX1/OXI3 intron 2 protein (854 aa).

The Reverse transcriptase domain occupies 329–613 (LSKDINTNMF…EGVSFLGYDV (285 aa)).

The protein resides in the mitochondrion. This Saccharomyces cerevisiae (strain ATCC 204508 / S288c) (Baker's yeast) protein is Putative COX1/OXI3 intron 2 protein (AI2).